A 27-amino-acid chain; its full sequence is Cupiennin-4a (27 aa).

E27 carries the glutamic acid 1-amide modification.

As to expression, expressed by the venom gland.

It localises to the secreted. This is Cupiennin-4a from Cupiennius salei (American wandering spider).